The following is a 491-amino-acid chain: UDP-N-acetylmuramate--L-alanine ligase (491 aa).

Residue 126–132 participates in ATP binding; that stretch reads GTHGKTT.

The protein belongs to the MurCDEF family.

It localises to the cytoplasm. The enzyme catalyses UDP-N-acetyl-alpha-D-muramate + L-alanine + ATP = UDP-N-acetyl-alpha-D-muramoyl-L-alanine + ADP + phosphate + H(+). It participates in cell wall biogenesis; peptidoglycan biosynthesis. In terms of biological role, cell wall formation. In Shigella flexneri serotype 5b (strain 8401), this protein is UDP-N-acetylmuramate--L-alanine ligase.